A 260-amino-acid chain; its full sequence is Apolipoprotein A-I (260 aa).

The first 18 residues, 1–18 (MKFAALALALLLAVGSHA), serve as a signal peptide directing secretion. The tract at residues 32–63 (ARAVLDVYLTQVKDMSLRAVNQLDDPQYAEFK) is 3 X approximate tandem repeats. 2 tandem repeats follow at residues 64-85 (TNLAQRIEEMYTQIKTLQGSVS) and 87-107 (MTDSFYNTVMEVTKDTRESLN). The segment at 64 to 260 (TNLAQRIEEM…EIIAASVTKS (197 aa)) is 10 X approximate tandem repeats. The 3; half-length repeat unit spans residues 108 to 118 (VDLEALKSSLA). Tandem repeats lie at residues 119 to 140 (PQNEQLKQVIEKHLNDYRTLLT), 141 to 162 (PIYNDYKTKHDEEMAALKTRLE), 163 to 184 (PVMEELRTKIQANVEETKAVLM), 185 to 206 (PMVETVRTKVTERLESLREVVQ), and 207 to 225 (PYVQEYKEQMKQMYDQAQT). A 9; half-length repeat occupies 226–236 (VDTDALRTKIT). Residues 237–260 (PLVEEIKVKMNAIFEIIAASVTKS) form repeat 10.

Belongs to the apolipoprotein A1/A4/E family. Strong expression in liver with lower expression in intestine.

It is found in the secreted. Its function is as follows. Participates in the reverse transport of cholesterol from tissues to the liver for excretion by promoting cholesterol efflux from tissues and by acting as a cofactor for the lecithin cholesterol acyltransferase (LCAT). The sequence is that of Apolipoprotein A-I (apoa1) from Sparus aurata (Gilthead sea bream).